A 389-amino-acid polypeptide reads, in one-letter code: Probable acyl-CoA dehydrogenase fadE25 (389 aa).

The protein belongs to the acyl-CoA dehydrogenase family. It depends on FAD as a cofactor.

It catalyses the reaction a 2,3-saturated acyl-CoA + A = a 2,3-dehydroacyl-CoA + AH2. This chain is Probable acyl-CoA dehydrogenase fadE25 (fadE25), found in Mycobacterium leprae (strain TN).